The following is a 445-amino-acid chain: Argininosuccinate synthase (445 aa).

ATP is bound by residues 17–25 (AFSGGLDTS) and Ala43. Position 99 (Tyr99) interacts with L-citrulline. Gly129 and Thr131 together coordinate ATP. Residues Thr131, Asn135, and Asp136 each coordinate L-aspartate. Asn135 provides a ligand contact to L-citrulline. Asp136 provides a ligand contact to ATP. 2 residues coordinate L-citrulline: Arg139 and Ser192. Asp194 contributes to the ATP binding site. Thr201, Glu203, and Glu280 together coordinate L-citrulline.

It belongs to the argininosuccinate synthase family. Type 2 subfamily. As to quaternary structure, homotetramer.

The protein resides in the cytoplasm. It carries out the reaction L-citrulline + L-aspartate + ATP = 2-(N(omega)-L-arginino)succinate + AMP + diphosphate + H(+). Its pathway is amino-acid biosynthesis; L-arginine biosynthesis; L-arginine from L-ornithine and carbamoyl phosphate: step 2/3. The chain is Argininosuccinate synthase from Acidobacterium capsulatum (strain ATCC 51196 / DSM 11244 / BCRC 80197 / JCM 7670 / NBRC 15755 / NCIMB 13165 / 161).